The chain runs to 97 residues: CLAVATA3/ESR (CLE)-related protein ESR2-C (97 aa).

The disordered stretch occupies residues 1–97 (TRTDDKPGVN…IGPPPFLDRY (97 aa)). Residues Pro-47 and Pro-50 each carry the hydroxyproline modification. Pro-50 carries O-linked (Ara...) hydroxyproline glycosylation.

The protein belongs to the CLV3/ESR signal peptide family. Post-translationally, the O-glycosylation (arabinosylation) of the hydroxyproline Pro-50 enhances binding affinity of the ESR2Cp peptide for its receptor. In terms of tissue distribution, seed endosperm.

The protein resides in the secreted. It localises to the extracellular space. In terms of biological role, extracellular signal peptide that regulates cell fate. The protein is CLAVATA3/ESR (CLE)-related protein ESR2-C of Zea mays (Maize).